The chain runs to 96 residues: Muconolactone Delta-isomerase (96 aa).

The protein belongs to the muconolactone Delta-isomerase family. As to quaternary structure, homodecamer.

The enzyme catalyses (S)-muconolactone = (4,5-dihydro-5-oxofuran-2-yl)-acetate. It participates in aromatic compound metabolism; beta-ketoadipate pathway; 5-oxo-4,5-dihydro-2-furylacetate from catechol: step 3/3. The sequence is that of Muconolactone Delta-isomerase (catC) from Pseudomonas putida (Arthrobacter siderocapsulatus).